The primary structure comprises 504 residues: Anaerobic nitric oxide reductase transcription regulator NorR (504 aa).

D57 is subject to 4-aspartylphosphate. The Sigma-54 factor interaction domain maps to 187–416 (MIGLSPGMTQ…LEHAIHRAVV (230 aa)). Residues 215–222 (GETGTGKE) and 278–287 (ADNGTLFLDE) each bind ATP. The segment at residues 479–498 (WAACARMLETDVANLHRLAK) is a DNA-binding region (H-T-H motif).

Its pathway is nitrogen metabolism; nitric oxide reduction. In terms of biological role, required for the expression of anaerobic nitric oxide (NO) reductase, acts as a transcriptional activator for at least the norVW operon. Activation also requires sigma-54. This Shigella boydii serotype 4 (strain Sb227) protein is Anaerobic nitric oxide reductase transcription regulator NorR.